The primary structure comprises 150 residues: Transcriptional repressor NrdR (150 aa).

The segment at 3–34 (CPFCQHDHSKVIDSRVIDAGSAIRRRRECSKC) is a zinc-finger region. In terms of domain architecture, ATP-cone spans 46 to 136 (LLVVKRNGVT…VYKSFDSADD (91 aa)).

This sequence belongs to the NrdR family. It depends on Zn(2+) as a cofactor.

In terms of biological role, negatively regulates transcription of bacterial ribonucleotide reductase nrd genes and operons by binding to NrdR-boxes. The sequence is that of Transcriptional repressor NrdR from Corynebacterium glutamicum (strain ATCC 13032 / DSM 20300 / JCM 1318 / BCRC 11384 / CCUG 27702 / LMG 3730 / NBRC 12168 / NCIMB 10025 / NRRL B-2784 / 534).